We begin with the raw amino-acid sequence, 628 residues long: Propionate--CoA ligase (628 aa).

This sequence belongs to the ATP-dependent AMP-binding enzyme family.

It carries out the reaction propanoate + ATP + CoA = propanoyl-CoA + AMP + diphosphate. It participates in organic acid metabolism; propanoate degradation. In terms of biological role, catalyzes the synthesis of propionyl-CoA from propionate and CoA. Also converts acetate to acetyl-CoA but with a lower specific activity. The polypeptide is Propionate--CoA ligase (prpE) (Salmonella typhimurium (strain LT2 / SGSC1412 / ATCC 700720)).